We begin with the raw amino-acid sequence, 555 residues long: 2-succinyl-5-enolpyruvyl-6-hydroxy-3-cyclohexene-1-carboxylate synthase (555 aa).

This sequence belongs to the TPP enzyme family. MenD subfamily. Homodimer. It depends on Mg(2+) as a cofactor. Mn(2+) is required as a cofactor. Thiamine diphosphate serves as cofactor.

It carries out the reaction isochorismate + 2-oxoglutarate + H(+) = 5-enolpyruvoyl-6-hydroxy-2-succinyl-cyclohex-3-ene-1-carboxylate + CO2. It participates in quinol/quinone metabolism; 1,4-dihydroxy-2-naphthoate biosynthesis; 1,4-dihydroxy-2-naphthoate from chorismate: step 2/7. The protein operates within quinol/quinone metabolism; menaquinone biosynthesis. Catalyzes the thiamine diphosphate-dependent decarboxylation of 2-oxoglutarate and the subsequent addition of the resulting succinic semialdehyde-thiamine pyrophosphate anion to isochorismate to yield 2-succinyl-5-enolpyruvyl-6-hydroxy-3-cyclohexene-1-carboxylate (SEPHCHC). This chain is 2-succinyl-5-enolpyruvyl-6-hydroxy-3-cyclohexene-1-carboxylate synthase, found in Kineococcus radiotolerans (strain ATCC BAA-149 / DSM 14245 / SRS30216).